Here is a 277-residue protein sequence, read N- to C-terminus: Inositol monophosphatase 1 (277 aa).

4 residues coordinate Mg(2+): Glu-70, Asp-90, Ile-92, and Asp-93. Glu-70 is a substrate binding site. A substrate-binding site is contributed by 92 to 95 (IDGT). Thr-168 bears the Phosphothreonine mark. Residues 194–196 (GTA), Glu-213, and Asp-220 contribute to the substrate site. Asp-220 is a binding site for Mg(2+).

Belongs to the inositol monophosphatase superfamily. Homodimer. Mg(2+) serves as cofactor.

Its subcellular location is the cytoplasm. The enzyme catalyses a myo-inositol phosphate + H2O = myo-inositol + phosphate. It catalyses the reaction 1D-myo-inositol 1-phosphate + H2O = myo-inositol + phosphate. The catalysed reaction is 1D-myo-inositol 2-phosphate + H2O = myo-inositol + phosphate. It carries out the reaction 1D-myo-inositol 3-phosphate + H2O = myo-inositol + phosphate. The enzyme catalyses 1D-myo-inositol 4-phosphate + H2O = myo-inositol + phosphate. It catalyses the reaction 1D-myo-inositol 5-phosphate + H2O = myo-inositol + phosphate. The catalysed reaction is 1D-myo-inositol 6-phosphate + H2O = myo-inositol + phosphate. It carries out the reaction scyllo-inositol 1-phosphate + H2O = scyllo-inositol + phosphate. The enzyme catalyses alpha-D-galactose 1-phosphate + H2O = D-galactose + phosphate. It catalyses the reaction alpha-D-glucose 1-phosphate + H2O = D-glucose + phosphate. The catalysed reaction is D-glucose 6-phosphate + H2O = D-glucose + phosphate. It carries out the reaction beta-D-fructose 1-phosphate + H2O = D-fructose + phosphate. The enzyme catalyses glycerol 2-phosphate + H2O = glycerol + phosphate. It catalyses the reaction adenosine 2'-phosphate + H2O = adenosine + phosphate. Its pathway is polyol metabolism; myo-inositol biosynthesis; myo-inositol from D-glucose 6-phosphate: step 2/2. Activity with myo-inositol monophosphates and D-galactose 1-phosphate is inhibited by Li(+), Ca(2+) and Mn(2+), but also by Mg(2+) at concentrations above 3 mM. Phosphatase involved in the dephosphorylation of myo-inositol monophosphates to generate myo-inositol. Is also able to dephosphorylate scyllo-inositol-phosphate, myo-inositol 1,4-diphosphate, scyllo-inositol-1,3-diphosphate and scyllo-inositol-1,4-diphosphate. Also dephosphorylates in vitro other sugar-phosphates including D-galactose-1-phosphate, glucose-1-phosphate, glucose-6-phosphate, fructose-1-phosphate, beta-glycerophosphate and 2'-AMP. Responsible for the provision of inositol required for synthesis of phosphatidylinositols and polyphosphoinositides, and involved in maintaining normal brain function. Has been implicated as the pharmacological target for lithium (Li(+)) action in brain, which is used to treat bipolar affective disorder. Is equally active with 1D-myo-inositol 1-phosphate, 1D-myo-inositol 3-phosphate and D-galactose 1-phosphate. The sequence is that of Inositol monophosphatase 1 from Homo sapiens (Human).